Consider the following 421-residue polypeptide: Gamma-glutamyl phosphate reductase (421 aa).

The protein belongs to the gamma-glutamyl phosphate reductase family.

It is found in the cytoplasm. The catalysed reaction is L-glutamate 5-semialdehyde + phosphate + NADP(+) = L-glutamyl 5-phosphate + NADPH + H(+). The protein operates within amino-acid biosynthesis; L-proline biosynthesis; L-glutamate 5-semialdehyde from L-glutamate: step 2/2. Its function is as follows. Catalyzes the NADPH-dependent reduction of L-glutamate 5-phosphate into L-glutamate 5-semialdehyde and phosphate. The product spontaneously undergoes cyclization to form 1-pyrroline-5-carboxylate. The chain is Gamma-glutamyl phosphate reductase from Pseudomonas fluorescens (strain ATCC BAA-477 / NRRL B-23932 / Pf-5).